We begin with the raw amino-acid sequence, 417 residues long: Lissencephaly-1 homolog (417 aa).

In terms of domain architecture, LisH spans 7–39 (QKEELNGAILDYFDSSGYKLTSTEFTKETNIEL). The stretch at 52–80 (TSVIRLQKKVMDLEAKVSQLEEELNNGGR) forms a coiled coil. The interval 72–93 (EEELNNGGRGPARRGKEDALPR) is disordered. WD repeat units lie at residues 102–143 (GHRN…RTLK), 144–185 (GHTN…KTLH), 186–225 (GHDH…CTKT), 228–267 (GHED…CLLT), 270–339 (EHSH…CLQT), 342–383 (GHDN…KTIN), and 385–417 (AHSH…WKLG).

This sequence belongs to the WD repeat LIS1/nudF family.

It localises to the cytoplasm. It is found in the cytoskeleton. The protein resides in the microtubule organizing center. Its subcellular location is the centrosome. In terms of biological role, positively regulates the activity of the minus-end directed microtubule motor protein dynein. May enhance dynein-mediated microtubule sliding by targeting dynein to the microtubule plus end. Required for several dynein- and microtubule-dependent processes. This chain is Lissencephaly-1 homolog, found in Heterostelium pallidum (strain ATCC 26659 / Pp 5 / PN500) (Cellular slime mold).